A 648-amino-acid polypeptide reads, in one-letter code: Acetyl-coenzyme A synthetase (648 aa).

Residues 191–194 (RGGR), threonine 310, and asparagine 334 each bind CoA. Residues 386-388 (GEP), 410-415 (DTWWQT), aspartate 499, and arginine 514 each bind ATP. Position 522 (serine 522) interacts with CoA. An ATP-binding site is contributed by arginine 525. Residues valine 536, histidine 538, and isoleucine 541 each contribute to the Mg(2+) site. Arginine 583 is a binding site for CoA. Lysine 608 carries the N6-acetyllysine modification.

It belongs to the ATP-dependent AMP-binding enzyme family. Mg(2+) is required as a cofactor. Acetylated. Deacetylation by the SIR2-homolog deacetylase activates the enzyme.

The enzyme catalyses acetate + ATP + CoA = acetyl-CoA + AMP + diphosphate. In terms of biological role, catalyzes the conversion of acetate into acetyl-CoA (AcCoA), an essential intermediate at the junction of anabolic and catabolic pathways. AcsA undergoes a two-step reaction. In the first half reaction, AcsA combines acetate with ATP to form acetyl-adenylate (AcAMP) intermediate. In the second half reaction, it can then transfer the acetyl group from AcAMP to the sulfhydryl group of CoA, forming the product AcCoA. In Aeromonas hydrophila subsp. hydrophila (strain ATCC 7966 / DSM 30187 / BCRC 13018 / CCUG 14551 / JCM 1027 / KCTC 2358 / NCIMB 9240 / NCTC 8049), this protein is Acetyl-coenzyme A synthetase.